A 512-amino-acid chain; its full sequence is Sodium/proline symporter (512 aa).

The next 13 membrane-spanning stretches (helical) occupy residues 16 to 36 (WQTY…GFYG), 54 to 74 (IGPY…WMIM), 85 to 105 (LSAM…YFVV), 139 to 159 (IISG…GFVS), 174 to 194 (FGLI…GYLA), 200 to 220 (FFQG…AMMN), 240 to 260 (LFKG…LGYF), 286 to 306 (ISWM…GIAF), 327 to 347 (VLFH…AIMS), 381 to 401 (FVMI…AIAW), 410 to 430 (LVGN…LFAL), 438 to 458 (AGAV…IAWI), and 467 to 487 (IFGL…TYVV).

This sequence belongs to the sodium:solute symporter (SSF) (TC 2.A.21) family.

Its subcellular location is the cell membrane. It catalyses the reaction L-proline(in) + Na(+)(in) = L-proline(out) + Na(+)(out). Functionally, catalyzes the sodium-dependent uptake of extracellular L-proline. Since most S.aureus strains are L-proline auxotrophs, this transporter may aid the bacterial persistence during an infection of tissues with low proline concentrations. In Staphylococcus aureus (strain Newman), this protein is Sodium/proline symporter (putP).